Consider the following 913-residue polypeptide: Cadherin-4 (913 aa).

A signal peptide spans 1-19; it reads MRTGSRLLLVLLVWGSAAA. A propeptide spanning residues 20-166 is cleaved from the precursor; the sequence is LNGDLTVRPT…SAKGLRRQKR (147 aa). Cadherin domains follow at residues 167 to 274, 275 to 389, 390 to 504, 505 to 610, and 611 to 721; these read DWVI…RPEF, INQV…PPEF, TTST…APYF, PTNH…DNAP, and ELLP…TIGA. The Extracellular segment spans residues 167–731; sequence DWVIPPINVP…VAAAGLGTGA (565 aa). Residues Asn280, Asn409, Asn554, Asn629, Asn658, and Asn699 are each glycosylated (N-linked (GlcNAc...) asparagine). A helical transmembrane segment spans residues 732–753; sequence IIAILICIIILLTMVLLFVVWM. The Cytoplasmic segment spans residues 754–913; that stretch reads KRREKERHTK…ADMYGGGEED (160 aa).

Embryonic brain and neuronal retina.

The protein localises to the cell membrane. Functionally, cadherins are calcium-dependent cell adhesion proteins. They preferentially interact with themselves in a homophilic manner in connecting cells; cadherins may thus contribute to the sorting of heterogeneous cell types. May play an important role in retinal development. This Gallus gallus (Chicken) protein is Cadherin-4 (CDH4).